We begin with the raw amino-acid sequence, 312 residues long: MANYLDFEKSIKQIDDDISSAKIRGDDSAVEILKKNLEKEINKVYKNLSEFQRLQLARHPDRPYSLDYVRALLKNYYEIHGDRVFRDDPSIVCFLGYIADKKIVVIAEQKGRGTKYKLKRNFGMPHPEGYRKALRVAKLAEKFSIPIIFFIDTPGAYPGIGAEERGQSEAIARNLFEFSDIKTPTIAIVIGEGGSGGALAIGVADKLAMLSNSIFSVISPEGCAAILWKDPDKSEAATKALKITAEELKELNLIDDVIKEPKMGAHRDKDAAAKAVGNYIIEKLNELEKIPLDEILRKRKEKILNTGVFEEL.

One can recognise a CoA carboxyltransferase C-terminal domain in the interval 25–286 (GDDSAVEILK…GNYIIEKLNE (262 aa)).

Belongs to the AccA family. Acetyl-CoA carboxylase is a heterohexamer composed of biotin carboxyl carrier protein (AccB), biotin carboxylase (AccC) and two subunits each of ACCase subunit alpha (AccA) and ACCase subunit beta (AccD).

Its subcellular location is the cytoplasm. It catalyses the reaction N(6)-carboxybiotinyl-L-lysyl-[protein] + acetyl-CoA = N(6)-biotinyl-L-lysyl-[protein] + malonyl-CoA. It functions in the pathway lipid metabolism; malonyl-CoA biosynthesis; malonyl-CoA from acetyl-CoA: step 1/1. In terms of biological role, component of the acetyl coenzyme A carboxylase (ACC) complex. First, biotin carboxylase catalyzes the carboxylation of biotin on its carrier protein (BCCP) and then the CO(2) group is transferred by the carboxyltransferase to acetyl-CoA to form malonyl-CoA. In Campylobacter hominis (strain ATCC BAA-381 / DSM 21671 / CCUG 45161 / LMG 19568 / NCTC 13146 / CH001A), this protein is Acetyl-coenzyme A carboxylase carboxyl transferase subunit alpha.